Here is a 124-residue protein sequence, read N- to C-terminus: UPF0482 protein YPK_1977 (124 aa).

An N-terminal signal peptide occupies residues 1–32; it reads MMKINNLPRLIRAFLPATLLMLPLVWQTPALA. The tract at residues 47–69 is disordered; sequence GGNNDPMSKEQARQSQQQWDETN.

This sequence belongs to the UPF0482 family.

The chain is UPF0482 protein YPK_1977 from Yersinia pseudotuberculosis serotype O:3 (strain YPIII).